The following is a 299-amino-acid chain: UTP--glucose-1-phosphate uridylyltransferase (299 aa).

This sequence belongs to the UDPGP type 2 family.

The enzyme catalyses alpha-D-glucose 1-phosphate + UTP + H(+) = UDP-alpha-D-glucose + diphosphate. It functions in the pathway carbohydrate metabolism; nucleotide-sugar metabolism. Its pathway is capsule biogenesis; capsule polysaccharide biosynthesis. The polypeptide is UTP--glucose-1-phosphate uridylyltransferase (cap4C) (Streptococcus pneumoniae serotype 4 (strain ATCC BAA-334 / TIGR4)).